A 367-amino-acid chain; its full sequence is tRNA-specific 2-thiouridylase MnmA (367 aa).

ATP-binding positions include 12–19 (GMSGGVDS) and Met-38. The interaction with target base in tRNA stretch occupies residues 98-100 (NPD). Cys-103 (nucleophile) is an active-site residue. A disulfide bridge links Cys-103 with Cys-200. Gly-128 is an ATP binding site. Residues 150 to 152 (KDQ) are interaction with tRNA. The Cysteine persulfide intermediate role is filled by Cys-200. The interval 312–313 (RY) is interaction with tRNA.

It belongs to the MnmA/TRMU family. Interacts with TusE.

The protein localises to the cytoplasm. It catalyses the reaction S-sulfanyl-L-cysteinyl-[protein] + uridine(34) in tRNA + AH2 + ATP = 2-thiouridine(34) in tRNA + L-cysteinyl-[protein] + A + AMP + diphosphate + H(+). Functionally, catalyzes the 2-thiolation of uridine at the wobble position (U34) of tRNA(Lys), tRNA(Glu) and tRNA(Gln), leading to the formation of s(2)U34, the first step of tRNA-mnm(5)s(2)U34 synthesis. Sulfur is provided by IscS, via a sulfur-relay system. Binds ATP and its substrate tRNAs. The chain is tRNA-specific 2-thiouridylase MnmA from Blochmanniella pennsylvanica (strain BPEN).